Here is a 606-residue protein sequence, read N- to C-terminus: Maternal effect protein oskar (606 aa).

Residues 152–221 form the HTH OST-type domain; it reads EYPDIDSEVR…SGKRIFNLKA (70 aa). Residues Ser-270 and Ser-275 each carry the phosphoserine modification. The segment at 425–439 is leucine-zipper; it reads LMGDDFMLYLARMEL.

As to quaternary structure, interacts with smaug (smg). Interacts with yl/yolkless. Begins to accumulate at the posterior pole of the oocyte from stage 8 onwards.

It is found in the endosome. In terms of biological role, organizes the germ plasm and directs localization of the posterior determinant nanos. Oskar protein is required to keep nanos (nos) RNA and staufen protein at the posterior pole. The chain is Maternal effect protein oskar (osk) from Drosophila melanogaster (Fruit fly).